The sequence spans 316 residues: Ribosomal RNA small subunit methyltransferase H (316 aa).

Residues 35–37 (SGH), Asp55, Phe84, Asp105, and Gln112 contribute to the S-adenosyl-L-methionine site.

Belongs to the methyltransferase superfamily. RsmH family.

Its subcellular location is the cytoplasm. The enzyme catalyses cytidine(1402) in 16S rRNA + S-adenosyl-L-methionine = N(4)-methylcytidine(1402) in 16S rRNA + S-adenosyl-L-homocysteine + H(+). Its function is as follows. Specifically methylates the N4 position of cytidine in position 1402 (C1402) of 16S rRNA. This is Ribosomal RNA small subunit methyltransferase H from Streptococcus pyogenes serotype M18 (strain MGAS8232).